The chain runs to 238 residues: Survival of motor neuron-related-splicing factor 30 (238 aa).

In terms of domain architecture, Tudor spans 72-132 (SWKVGDKCMA…KPVEEGRKAK (61 aa)). The Nuclear localization signal motif lies at 142–160 (KKEMIAQQREYKKKKALKK). Serine 201 is subject to Phosphoserine. Residue lysine 219 is modified to N6-acetyllysine.

It belongs to the SMN family. Associates with spliceosomes. Associates with U4/U5/U6 tri-snRNP and with U2 snRNP.

The protein resides in the nucleus speckle. Its subcellular location is the nucleus. The protein localises to the cajal body. In terms of biological role, involved in spliceosome assembly. The chain is Survival of motor neuron-related-splicing factor 30 (SMNDC1) from Pongo abelii (Sumatran orangutan).